The sequence spans 486 residues: Betaine aldehyde dehydrogenase (486 aa).

The K(+) site is built by T23 and D90. An NAD(+)-binding site is contributed by 147–149; the sequence is GAW. The active-site Charge relay system is K159. NAD(+)-binding positions include 173–176 and 226–229; these read KPSE and ESGT. Residue L241 coordinates K(+). The active-site Proton acceptor is the E247. Residues G249, C281, and E382 each coordinate NAD(+). The Nucleophile role is filled by C281. Position 281 is a cysteine sulfenic acid (-SOH) (C281). K(+)-binding residues include K452 and G455. E459 acts as the Charge relay system in catalysis.

It belongs to the aldehyde dehydrogenase family. Dimer of dimers. The cofactor is K(+).

It catalyses the reaction betaine aldehyde + NAD(+) + H2O = glycine betaine + NADH + 2 H(+). The protein operates within amine and polyamine biosynthesis; betaine biosynthesis via choline pathway; betaine from betaine aldehyde: step 1/1. In terms of biological role, involved in the biosynthesis of the osmoprotectant glycine betaine. Catalyzes the irreversible oxidation of betaine aldehyde to the corresponding acid. This chain is Betaine aldehyde dehydrogenase, found in Vibrio campbellii (strain ATCC BAA-1116).